The sequence spans 671 residues: UvrABC system protein C (671 aa).

The segment at 1 to 20 is disordered; the sequence is MPHLPDSMSPEAPAGPAPAT. The span at 10–20 shows a compositional bias: low complexity; that stretch reads PEAPAGPAPAT. The GIY-YIG domain maps to 37–115; that stretch reads PLPGVYRYFD…IKTLNPKYNI (79 aa). The UVR domain occupies 232–267; it reads RQVMEALEARMMAHAEKLEFEQAAELRNQVAALSNV.

The protein belongs to the UvrC family. Interacts with UvrB in an incision complex.

The protein localises to the cytoplasm. Its function is as follows. The UvrABC repair system catalyzes the recognition and processing of DNA lesions. UvrC both incises the 5' and 3' sides of the lesion. The N-terminal half is responsible for the 3' incision and the C-terminal half is responsible for the 5' incision. This chain is UvrABC system protein C, found in Albidiferax ferrireducens (strain ATCC BAA-621 / DSM 15236 / T118) (Rhodoferax ferrireducens).